The sequence spans 224 residues: UPF0758 protein ABO_0214 (224 aa).

In terms of domain architecture, MPN spans 102 to 224 (PLDNPDKAGQ…WVSLASRGAV (123 aa)). The Zn(2+) site is built by histidine 173, histidine 175, and aspartate 186. The short motif at 173 to 186 (HNHPSGVAEPSQSD) is the JAMM motif element.

The protein belongs to the UPF0758 family.

The protein is UPF0758 protein ABO_0214 of Alcanivorax borkumensis (strain ATCC 700651 / DSM 11573 / NCIMB 13689 / SK2).